The sequence spans 439 residues: MSVPSALMKQPPIQSTAGAVPVRNEKGEISMEKVKVKRYVSGKRPDYAPMESSDEEDEEFQFIKKAKEQEAEPEEQEEDSSSDPRLRRLQNRISEDVEERLARHRKIVEPEVVGESDSEVEGDAWRMEREDSSEEEEEEIDDEEIERRRGMMRQRAQERKNEEMEVMEVEDEGRSGEESESESEYEEYTDSEDEMEPRLKPVFIRKKDRVTVQEREAEALKQKELEQEAKRMAEERRKYTLKIVEEETKKELEENKRSLAALDALNTDDENDEEEYEAWKVRELKRIKRDREDREALEKEKAEIERMRNLTEEERRAELRANGKVITNKAVKGKYKFLQKYYHRGAFFMDEDEEVYKRDFSAPTLEDHFNKTILPKVMQVKNFGRSGRTKYTHLVDQDTTSFDSAWGQESAQNTKFFKQKAAGVRDVFERPSAKKRKTT.

Disordered stretches follow at residues 1–27 (MSVP…NEKG) and 39–200 (YVSG…PRLK). Ser2 carries the N-acetylserine modification. A phosphoserine mark is found at Ser52 and Ser53. Over residues 61–70 (QFIKKAKEQE) the composition is skewed to basic and acidic residues. Lys67 is covalently cross-linked (Glycyl lysine isopeptide (Lys-Gly) (interchain with G-Cter in SUMO2)). The segment covering 71-81 (AEPEEQEEDSS) has biased composition (acidic residues). Phosphoserine occurs at positions 94, 116, 118, 132, and 133. 2 stretches are compositionally biased toward acidic residues: residues 112–122 (VVGESDSEVEG) and 131–144 (DSSE…DDEE). The segment covering 145-163 (IERRRGMMRQRAQERKNEE) has biased composition (basic and acidic residues). The segment covering 178–195 (ESESESEYEEYTDSEDEM) has biased composition (acidic residues). A Glycyl lysine isopeptide (Lys-Gly) (interchain with G-Cter in SUMO2) cross-link involves residue Lys249. A Phosphothreonine modification is found at Thr267. Residue Lys357 forms a Glycyl lysine isopeptide (Lys-Gly) (interchain with G-Cter in SUMO2) linkage. Residue Ser361 is modified to Phosphoserine. Residues Lys371, Lys381, Lys415, and Lys418 each participate in a glycyl lysine isopeptide (Lys-Gly) (interchain with G-Cter in SUMO2) cross-link. A Phosphoserine modification is found at Ser432.

The protein belongs to the MFAP1 family. As to quaternary structure, component of the spliceosome B complex. Interacts with PRPF38A (via N-terminal interaction domain).

Its subcellular location is the nucleus. In terms of biological role, involved in pre-mRNA splicing as a component of the spliceosome. The sequence is that of Microfibrillar-associated protein 1 from Homo sapiens (Human).